The primary structure comprises 328 residues: MSKKPVRVAVTGAAGQIGYAILFRIASGEMLGKDQPVILQLLEVPVEKAQQALQGVMMELQDCAFPLLAGMEAHSDPMTAFKDVDYALLIGSRPRGPGMERAELLAVNGAIFTAQGKALNAVASRNVKVLVVGNPANTNAYIAMKSAPDLPAKNFTAMLRLDHNRALSQLASKTGKAVADIEKMAVWGNHSPTMYADYRFATINGESVKDMINDQDWNANTFLPTVGKRGAAIIAARGVSSAASAANAAIDHMRDWALGTNGKWVTMGIPSDGQYGIPKETMFGFPVTCEGGEYKVVQNLPIDAFSQECINKTLKELQDEQAGVAHLL.

12 to 18 lines the NAD(+) pocket; sequence GAAGQIG. Arginine 95 and arginine 101 together coordinate substrate. NAD(+)-binding positions include asparagine 108, glutamine 115, and 132-134; that span reads VGN. Residues asparagine 134 and arginine 165 each coordinate substrate. The active-site Proton acceptor is histidine 190.

The protein belongs to the LDH/MDH superfamily. MDH type 2 family.

The catalysed reaction is (S)-malate + NAD(+) = oxaloacetate + NADH + H(+). Functionally, catalyzes the reversible oxidation of malate to oxaloacetate. This is Malate dehydrogenase 1 from Albidiferax ferrireducens (strain ATCC BAA-621 / DSM 15236 / T118) (Rhodoferax ferrireducens).